We begin with the raw amino-acid sequence, 282 residues long: uncharacterized protein (282 aa).

Disordered regions lie at residues 1–45 (MPLE…EEDE) and 201–259 (DRRR…KPWG). Positions 10 to 19 (SEMKEFKEST) are enriched in basic and acidic residues. Residues 26–38 (SVSSEETLTQSMV) show a composition bias toward polar residues. The segment covering 201–237 (DRRRKEDSKARSRLTRREEHSEHHRSGKSRRERERRS) has biased composition (basic and acidic residues).

This is an uncharacterized protein from Ostreid herpesvirus 1 (isolate France) (OsHV-1).